Consider the following 872-residue polypeptide: Alanine--tRNA ligase (872 aa).

The Zn(2+) site is built by histidine 567, histidine 571, cysteine 669, and histidine 673.

The protein belongs to the class-II aminoacyl-tRNA synthetase family. Zn(2+) is required as a cofactor.

The protein resides in the cytoplasm. The catalysed reaction is tRNA(Ala) + L-alanine + ATP = L-alanyl-tRNA(Ala) + AMP + diphosphate. Catalyzes the attachment of alanine to tRNA(Ala) in a two-step reaction: alanine is first activated by ATP to form Ala-AMP and then transferred to the acceptor end of tRNA(Ala). Also edits incorrectly charged Ser-tRNA(Ala) and Gly-tRNA(Ala) via its editing domain. The protein is Alanine--tRNA ligase of Streptococcus pneumoniae serotype 2 (strain D39 / NCTC 7466).